Reading from the N-terminus, the 550-residue chain is Dr1-associated corepressor homolog (550 aa).

Positions 7-71 (TKFPMARIKK…ISVNHLKECI (65 aa)) constitute a Histone-fold domain. The segment covering 89 to 103 (DDKNEKRGRPKKTEG) has biased composition (basic and acidic residues). 3 disordered regions span residues 89-355 (DDKN…GQQF), 378-444 (SLPV…SNIN), and 461-512 (FNSF…LPSF). A compositionally biased stretch (acidic residues) spans 104-140 (EDGGEEEEEEEEEMDMGEEEEEEEDEDDDDSDEEEEE). Over residues 148–164 (GSRGGKGSRGGRGGARG) the composition is skewed to gly residues. Residues 182–193 (TTITTTTATTTP) show a composition bias toward low complexity. Residues 200–224 (NFANSPKDIQSTSLKKPSARKSNTT) are compositionally biased toward polar residues. 3 stretches are compositionally biased toward low complexity: residues 225–238 (SPKS…SAGS), 245–350 (NNNN…NNNN), and 382–422 (LNNS…NNSN).

It belongs to the NC2 alpha/DRAP1 family.

The protein localises to the nucleus. Involved in transcriptional regulation. Component of the NC2 complex which represses RNA polymerase II transcription through binding to tbp and thereby inhibiting the assembly of the preinitiation complex. This Dictyostelium discoideum (Social amoeba) protein is Dr1-associated corepressor homolog (drap1).